Here is a 273-residue protein sequence, read N- to C-terminus: MAEHGSRVSLHGFNNLTKSLSFNIYDVCYAKTAEQRHAYIEYIDEVYNAERLTQILTDVADIIGANILNIARQDYEPQGASVTILISEEPVSEAVAEAADQVGPGPLPETVLGHLDKSHITVHTYPESHPDHGVSTFRADIDVSTCGVISPLKALNYLIHSFDSDIVTMDYRVRGFTRDVRGRKHFIDHDINSIQNYLADDTKERYHTIDVNVFQENLFHTKMMVRELDLENYLFGESAGNLEPAERREIERQLRREMTEIFAGRNLAPDQEV.

Catalysis depends on S118, which acts as the Schiff-base intermediate with substrate; via pyruvic acid. Pyruvic acid (Ser); by autocatalysis is present on S118. The active-site Proton acceptor; for processing activity is the H123. The Proton donor; for catalytic activity role is filled by C146.

Belongs to the prokaryotic AdoMetDC family. Type 2 subfamily. As to quaternary structure, heterooctamer of four alpha and four beta chains arranged as a tetramer of alpha/beta heterodimers. The cofactor is pyruvate. In terms of processing, is synthesized initially as an inactive proenzyme. Formation of the active enzyme involves a self-maturation process in which the active site pyruvoyl group is generated from an internal serine residue via an autocatalytic post-translational modification. Two non-identical subunits are generated from the proenzyme in this reaction, and the pyruvate is formed at the N-terminus of the alpha chain, which is derived from the carboxyl end of the proenzyme. The post-translation cleavage follows an unusual pathway, termed non-hydrolytic serinolysis, in which the side chain hydroxyl group of the serine supplies its oxygen atom to form the C-terminus of the beta chain, while the remainder of the serine residue undergoes an oxidative deamination to produce ammonia and the pyruvoyl group blocking the N-terminus of the alpha chain.

It catalyses the reaction S-adenosyl-L-methionine + H(+) = S-adenosyl 3-(methylsulfanyl)propylamine + CO2. Its pathway is amine and polyamine biosynthesis; S-adenosylmethioninamine biosynthesis; S-adenosylmethioninamine from S-adenosyl-L-methionine: step 1/1. Its function is as follows. Catalyzes the decarboxylation of S-adenosylmethionine to S-adenosylmethioninamine (dcAdoMet), the propylamine donor required for the synthesis of the polyamines spermine and spermidine from the diamine putrescine. In Alkalilimnicola ehrlichii (strain ATCC BAA-1101 / DSM 17681 / MLHE-1), this protein is S-adenosylmethionine decarboxylase proenzyme.